Consider the following 1235-residue polypeptide: Ubiquitin carboxyl-terminal hydrolase 40 (1235 aa).

Residues 41–482 (SGIRNQGGTC…SAYMLFYRKA (442 aa)) enclose the USP domain. Cys-50 (nucleophile) is an active-site residue. The Proton acceptor role is filled by His-305.

It belongs to the peptidase C19 family.

The enzyme catalyses Thiol-dependent hydrolysis of ester, thioester, amide, peptide and isopeptide bonds formed by the C-terminal Gly of ubiquitin (a 76-residue protein attached to proteins as an intracellular targeting signal).. The protein is Ubiquitin carboxyl-terminal hydrolase 40 (Usp40) of Mus musculus (Mouse).